The sequence spans 683 residues: MLDKMRNIGIMAHIDAGKTTTTERILFYTGKIHKIGEIDDGQATMDWMAQEQDRGITIQSAATTTYWKNFQINIIDTPGHVDFTAEVERSLRVLDGAVAVLCAVGGVQPQTETVWHQADRYKVPRICFVNKMDRIGADFFAVLKDVHEKFGVEVMPVQIPIGASDSFEGVIDLIAMKEIHWDAATEGEKYEYTAIAQERLALAEEWREKMLDTISSASDEITELILEGKDVPEELIKKEIRKAVLNQSYIPFLCGSARKNIGVQPLIDAVVDFLPAPNEVLPAEAFNPKKEEKLSVPCKAEGAPLGLVFKIQYDKDAGSLCYVRMYSGKIKSGDQVFNTGKKKRERVNRILRMHSNKSEQMDSVQAGDIAVFIGLKISQTGDTLGSEGQPLLLESMQFPEPVISVSVEPKSLSESDRLKEVLEILSKEDPTFTSREDSETGQLIISGMGELHIDVLTRRMLDDFKVEARVGNPQVTYRESITTEKTQTEKYSKQLGGKDNEAELTLTVRPLERGSGNRFVSKVKTFQKSGSGGTNALPEDLLEAVKRSIEGCFSSGIKVGYPCTDIEVELVSVKYNELTATPFAYEAAAAKCFDDACSAAAPVLLEPVMAVDIMSPKEFVGDAMSQITQRGGLISSMDSKASTDIVHAQAPMAKMFGFSTDLRSATQGRASFTMSFSHFEIKR.

Positions 3–278 (DKMRNIGIMA…AVVDFLPAPN (276 aa)) constitute a tr-type G domain. GTP-binding positions include 12–19 (AHIDAGKT), 76–80 (DTPGH), and 130–133 (NKMD).

This sequence belongs to the TRAFAC class translation factor GTPase superfamily. Classic translation factor GTPase family. EF-G/EF-2 subfamily.

It localises to the cytoplasm. Catalyzes the GTP-dependent ribosomal translocation step during translation elongation. During this step, the ribosome changes from the pre-translocational (PRE) to the post-translocational (POST) state as the newly formed A-site-bound peptidyl-tRNA and P-site-bound deacylated tRNA move to the P and E sites, respectively. Catalyzes the coordinated movement of the two tRNA molecules, the mRNA and conformational changes in the ribosome. This is Elongation factor G 1 from Treponema denticola (strain ATCC 35405 / DSM 14222 / CIP 103919 / JCM 8153 / KCTC 15104).